Consider the following 141-residue polypeptide: Hemoglobin subunit alpha (141 aa).

Residues 1 to 141 (VLSGTDKTNV…VGLVLTAKYR (141 aa)) form the Globin domain. Histidine 58 is a binding site for O2. Histidine 87 serves as a coordination point for heme b.

This sequence belongs to the globin family. Heterotetramer of two alpha chains and two beta chains. In terms of tissue distribution, red blood cells.

Functionally, involved in oxygen transport from the lung to the various peripheral tissues. The polypeptide is Hemoglobin subunit alpha (HBA) (Psittacula krameri (Rose-ringed parakeet)).